The following is a 612-amino-acid chain: Peroxisomal carnitine O-octanoyltransferase (612 aa).

N-acetylmethionine is present on M1. 2 positions are modified to N6-succinyllysine: K40 and K57. The active-site Proton acceptor is the H327. CoA contacts are provided by residues K406 and 410-417; that span reads KNKMLHPD. K406 carries the N6-acetyllysine; alternate modification. N6-succinyllysine; alternate is present on K406. (R)-carnitine is bound by residues Y439, T441, and T452. Residues 610–612 carry the Microbody targeting signal motif; sequence THL.

Belongs to the carnitine/choline acetyltransferase family. Monomer.

It localises to the peroxisome. The enzyme catalyses octanoyl-CoA + (R)-carnitine = O-octanoyl-(R)-carnitine + CoA. The catalysed reaction is 4,8-dimethylnonanoyl-CoA + (R)-carnitine = O-4,8-dimethylnonanoyl-(R)-carnitine + CoA. It participates in lipid metabolism; fatty acid beta-oxidation. Its function is as follows. Beta-oxidation of fatty acids. The highest activity concerns the C6 to C10 chain length substrate. Converts the end product of pristanic acid beta oxidation, 4,8-dimethylnonanoyl-CoA, to its corresponding carnitine ester. This is Peroxisomal carnitine O-octanoyltransferase (CROT) from Homo sapiens (Human).